The chain runs to 309 residues: Isoaspartyl peptidase/L-asparaginase (309 aa).

The active-site Nucleophile is threonine 166. Substrate is bound by residues 194 to 197 (RVGD) and 217 to 220 (TGHG).

This sequence belongs to the Ntn-hydrolase family. Heterodimer of an alpha and beta chain produced by autocleavage. Post-translationally, cleaved into an alpha and beta chain by autocatalysis; this activates the enzyme. The N-terminal residue of the beta subunit is responsible for the nucleophile hydrolase activity.

It localises to the cytoplasm. It carries out the reaction L-asparagine + H2O = L-aspartate + NH4(+). It catalyses the reaction Cleavage of a beta-linked Asp residue from the N-terminus of a polypeptide.. Has both L-asparaginase and beta-aspartyl peptidase activity. Does not have aspartylglucosaminidase activity and is inactive toward GlcNAc-L-Asn. Likewise, has no activity toward glutamine. The polypeptide is Isoaspartyl peptidase/L-asparaginase (asrgl1) (Xenopus laevis (African clawed frog)).